The chain runs to 212 residues: Methylthioribulose-1-phosphate dehydratase (212 aa).

Residues histidine 97 and histidine 99 each contribute to the Zn(2+) site.

Belongs to the aldolase class II family. MtnB subfamily. Homotetramer. The cofactor is Zn(2+).

It carries out the reaction 5-(methylsulfanyl)-D-ribulose 1-phosphate = 5-methylsulfanyl-2,3-dioxopentyl phosphate + H2O. Its pathway is amino-acid biosynthesis; L-methionine biosynthesis via salvage pathway; L-methionine from S-methyl-5-thio-alpha-D-ribose 1-phosphate: step 2/6. In terms of biological role, catalyzes the dehydration of methylthioribulose-1-phosphate (MTRu-1-P) into 2,3-diketo-5-methylthiopentyl-1-phosphate (DK-MTP-1-P). The sequence is that of Methylthioribulose-1-phosphate dehydratase from Bacillus thuringiensis (strain Al Hakam).